Consider the following 156-residue polypeptide: Small ribosomal subunit protein uS7 (156 aa).

This sequence belongs to the universal ribosomal protein uS7 family. In terms of assembly, part of the 30S ribosomal subunit. Contacts proteins S9 and S11.

Functionally, one of the primary rRNA binding proteins, it binds directly to 16S rRNA where it nucleates assembly of the head domain of the 30S subunit. Is located at the subunit interface close to the decoding center, probably blocks exit of the E-site tRNA. The sequence is that of Small ribosomal subunit protein uS7 from Bacillus cytotoxicus (strain DSM 22905 / CIP 110041 / 391-98 / NVH 391-98).